The primary structure comprises 330 residues: Ketol-acid reductoisomerase (NADP(+)) (330 aa).

Residues 1–181 (MKVFYDSDFK…GLSRAGVIQT (181 aa)) form the KARI N-terminal Rossmann domain. Residues 24–27 (YGSQ), Arg-47, Ser-52, and 82–85 (DELQ) contribute to the NADP(+) site. Residue His-107 is part of the active site. An NADP(+)-binding site is contributed by Gly-133. The region spanning 182–327 (TFKEETETDL…AKLRKMCGLE (146 aa)) is the KARI C-terminal knotted domain. 4 residues coordinate Mg(2+): Asp-190, Glu-194, Glu-226, and Glu-230. A substrate-binding site is contributed by Ser-251.

The protein belongs to the ketol-acid reductoisomerase family. The cofactor is Mg(2+).

The enzyme catalyses (2R)-2,3-dihydroxy-3-methylbutanoate + NADP(+) = (2S)-2-acetolactate + NADPH + H(+). It carries out the reaction (2R,3R)-2,3-dihydroxy-3-methylpentanoate + NADP(+) = (S)-2-ethyl-2-hydroxy-3-oxobutanoate + NADPH + H(+). Its pathway is amino-acid biosynthesis; L-isoleucine biosynthesis; L-isoleucine from 2-oxobutanoate: step 2/4. It functions in the pathway amino-acid biosynthesis; L-valine biosynthesis; L-valine from pyruvate: step 2/4. Functionally, involved in the biosynthesis of branched-chain amino acids (BCAA). Catalyzes an alkyl-migration followed by a ketol-acid reduction of (S)-2-acetolactate (S2AL) to yield (R)-2,3-dihydroxy-isovalerate. In the isomerase reaction, S2AL is rearranged via a Mg-dependent methyl migration to produce 3-hydroxy-3-methyl-2-ketobutyrate (HMKB). In the reductase reaction, this 2-ketoacid undergoes a metal-dependent reduction by NADPH to yield (R)-2,3-dihydroxy-isovalerate. The chain is Ketol-acid reductoisomerase (NADP(+)) from Methanococcus maripaludis (strain C6 / ATCC BAA-1332).